We begin with the raw amino-acid sequence, 156 residues long: Phosphopantetheine adenylyltransferase (156 aa).

A substrate-binding site is contributed by threonine 10. ATP-binding positions include 10-11 (TF) and histidine 18. Lysine 42, leucine 74, and arginine 88 together coordinate substrate. Residues 89 to 91 (GLR), glutamate 99, and 124 to 130 (NAFISSS) each bind ATP.

This sequence belongs to the bacterial CoaD family. As to quaternary structure, homohexamer. Mg(2+) serves as cofactor.

Its subcellular location is the cytoplasm. The enzyme catalyses (R)-4'-phosphopantetheine + ATP + H(+) = 3'-dephospho-CoA + diphosphate. Its pathway is cofactor biosynthesis; coenzyme A biosynthesis; CoA from (R)-pantothenate: step 4/5. Reversibly transfers an adenylyl group from ATP to 4'-phosphopantetheine, yielding dephospho-CoA (dPCoA) and pyrophosphate. In Campylobacter concisus (strain 13826), this protein is Phosphopantetheine adenylyltransferase.